We begin with the raw amino-acid sequence, 468 residues long: Probable serine/threonine-protein phosphatase 2A activator 2 (468 aa).

Low complexity predominate over residues 412 to 424 (STTTNNNNNNITS). Residues 412–468 (STTTNNNNNNITSGDHCNDNEQQCSETHNHDHNHNHNHNHNHPPPPPQQQRSYFPLD) form a disordered region.

This sequence belongs to the PTPA-type PPIase family.

It localises to the cytoplasm. It carries out the reaction [protein]-peptidylproline (omega=180) = [protein]-peptidylproline (omega=0). Functionally, PPIases accelerate the folding of proteins. It catalyzes the cis-trans isomerization of proline imidic peptide bonds in oligopeptides. Acts as a regulatory subunit for PP2A-like phosphatases modulating their activity or substrate specificity, probably by inducing a conformational change in the catalytic subunit, a direct target of the PPIase. In Dictyostelium discoideum (Social amoeba), this protein is Probable serine/threonine-protein phosphatase 2A activator 2 (ppp2r4B).